The chain runs to 462 residues: Chromosomal replication initiator protein DnaA (462 aa).

The domain I, interacts with DnaA modulators stretch occupies residues 1–86 (MSLSLWQQCL…EVGNKPVSQN (86 aa)). The segment at 86–125 (NDSPPQRVVTHTPVAPAPQNTSVRPSWDNTAVQPELSYRS) is domain II. A domain III, AAA+ region region spans residues 126–342 (NVNPKHTFDN…GALNRVIANA (217 aa)). ATP-binding residues include glycine 170, glycine 172, lysine 173, and threonine 174. Residues 343 to 462 (NFTGRAITID…FSNLIRTLSS (120 aa)) form a domain IV, binds dsDNA region.

This sequence belongs to the DnaA family. As to quaternary structure, oligomerizes as a right-handed, spiral filament on DNA at oriC.

It is found in the cytoplasm. Plays an essential role in the initiation and regulation of chromosomal replication. ATP-DnaA binds to the origin of replication (oriC) to initiate formation of the DNA replication initiation complex once per cell cycle. Binds the DnaA box (a 9 base pair repeat at the origin) and separates the double-stranded (ds)DNA. Forms a right-handed helical filament on oriC DNA; dsDNA binds to the exterior of the filament while single-stranded (ss)DNA is stabiized in the filament's interior. The ATP-DnaA-oriC complex binds and stabilizes one strand of the AT-rich DNA unwinding element (DUE), permitting loading of DNA polymerase. After initiation quickly degrades to an ADP-DnaA complex that is not apt for DNA replication. Binds acidic phospholipids. This Photorhabdus laumondii subsp. laumondii (strain DSM 15139 / CIP 105565 / TT01) (Photorhabdus luminescens subsp. laumondii) protein is Chromosomal replication initiator protein DnaA.